A 629-amino-acid polypeptide reads, in one-letter code: Pumilio homolog 3 (629 aa).

2 stretches are compositionally biased toward basic residues: residues 1-10 (MEGKPRKKSF) and 18-37 (PSFK…RPFK). Residues 1–92 (MEGKPRKKSF…EGDERKKPKW (92 aa)) are disordered. Over residues 62 to 92 (KPTDGKFAKKRKFPGDRIKQEEGDERKKPKW) the composition is skewed to basic and acidic residues. The short motif at 88–100 (KKPKWDEFKQKKK) is the Nuclear localization signal element. Positions 120 to 473 (RAKQVWEMVR…ELLEAASPSL (354 aa)) constitute a PUM-HD domain. Pumilio repeat units lie at residues 160-195 (HDST…LSKS), 196-231 (KYAR…MLRH), 232-260 (SEAS…ELYG), 272-308 (PTLE…VIKH), 309-344 (SLVH…MAHT), 345-380 (HDGA…FAMG), 381-418 (EYAH…IISN), 419-487 (KHGK…MVMD), 488-534 (KSCC…MAEH), 535-579 (PAGH…WASV), and 580-618 (NRGA…LQNS).

In adult, expressed at high levels in eye and ovary and at lower levels in brain, testis and head kidney. In the adult ovary, prominently expressed in early immature follicles.

It is found in the nucleus. It localises to the nucleolus. The protein resides in the nucleoplasm. The protein localises to the chromosome. Inhibits the poly(ADP-ribosyl)ation activity of PARP1 and the degradation of PARP1 by CASP3 following genotoxic stress. Binds to double-stranded RNA or DNA without sequence specificity. Involved in development of the eye and of primordial germ cells. In Danio rerio (Zebrafish), this protein is Pumilio homolog 3 (pum3).